The sequence spans 357 residues: Histidinol-phosphate aminotransferase (357 aa).

Lys221 carries the N6-(pyridoxal phosphate)lysine modification.

The protein belongs to the class-II pyridoxal-phosphate-dependent aminotransferase family. Histidinol-phosphate aminotransferase subfamily. Requires pyridoxal 5'-phosphate as cofactor.

It carries out the reaction L-histidinol phosphate + 2-oxoglutarate = 3-(imidazol-4-yl)-2-oxopropyl phosphate + L-glutamate. It functions in the pathway amino-acid biosynthesis; L-histidine biosynthesis; L-histidine from 5-phospho-alpha-D-ribose 1-diphosphate: step 7/9. The sequence is that of Histidinol-phosphate aminotransferase (hisC) from Sulfurisphaera tokodaii (strain DSM 16993 / JCM 10545 / NBRC 100140 / 7) (Sulfolobus tokodaii).